The sequence spans 559 residues: MRLLTLALLVAGSLAYKFEDCEQKPAALNQVLRVGAKLYSYNLDFFYQKALPYNAIYAFTDVFLQTNLTNADQYQFYQGTNCTTVQQLYDNDNRYFGILRKAALLRSHQLNPFNDTIVGVSTTEPYEISVLIWKVNYFRVGVYVGAIVLFLLASKLVRNVVFYYTSGCSFGLLASLLLVAFIVWRVAPKKTIGVPILIGGWSVSLYMLHFAWSNLQSIMIEYQKYVIGYFATVLLISMAVCYKRGPPTDARSHDIAQWTLQLVALALIYFSVQMVEVSTGTIGALIIQQICRGFLFAGIRWYFVGLKAVWRKFFPARRRLLNEEEYEEQAEKTTKEQLAQLREYCKKEGNRPWKIAGNVRSARRLARFIEGEDDHITEDEIYAHELTGDVLDDEDYDFNEDYGLRTPNESHFDLEDDEDGAEEWDEVVVRRRASEYGRDSVQSVRVPRSVSSRLLSPYQGQNHMNRSLGPGIGFRRDSTPRHGNFQSEHRPRMPRTEQIYRSRRVEYDVKNGRVEGPSSSTASGMTPSEYMRKARRIDATSKTPTRKSRHPTESEDADE.

The first 15 residues, 1-15 (MRLLTLALLVAGSLA), serve as a signal peptide directing secretion. Residues asparagine 67, asparagine 81, and asparagine 114 are each glycosylated (N-linked (GlcNAc...) asparagine). Helical transmembrane passes span 164-184 (YTSG…FIVW), 192-212 (IGVP…HFAW), 218-238 (IMIE…LISM), 267-287 (LIYF…ALII), and 290-310 (ICRG…KAVW). Asparagine 408 and asparagine 465 each carry an N-linked (GlcNAc...) asparagine glycan. Disordered stretches follow at residues 475 to 494 (RRDS…PRMP) and 510 to 559 (KNGR…DADE). Polar residues predominate over residues 517–526 (PSSSTASGMT). Residues 530–539 (YMRKARRIDA) are compositionally biased toward basic and acidic residues.

Belongs to the NEMP family.

It localises to the nucleus inner membrane. Its function is as follows. Contributes to nuclear envelope stiffness in germ cells. Required for fertility. This Caenorhabditis elegans protein is Nuclear envelope integral membrane protein.